Reading from the N-terminus, the 196-residue chain is UPF0056 membrane protein BU449 (196 aa).

Transmembrane regions (helical) follow at residues 8 to 28, 45 to 65, 71 to 91, 105 to 125, 134 to 154, and 174 to 194; these read TILLVLIMDPLGNLPIFMTIL, IIALIVMLLFLFVGEKILIIL, TVSISGGVILFLIAIKMIFPS, FLVPLAIPLVAGPSLLATLML, MFYLVGSLLISWFFTVIILLS, and MGLVLIMLSTQMFLDGIRAWF.

It belongs to the UPF0056 (MarC) family.

It localises to the cell membrane. In Buchnera aphidicola subsp. Acyrthosiphon pisum (strain APS) (Acyrthosiphon pisum symbiotic bacterium), this protein is UPF0056 membrane protein BU449.